Here is a 273-residue protein sequence, read N- to C-terminus: MKIIILLGLIGASSSAPLISQRLLSASNSHELLLNLNNGQLLPLQFQGAFNSWIPPFPGFLQQQQAQVSGRPQFTLSTLESFAGLFPNQIPLSRQVGLAQGGQAGQPDLSQQQTPPQTQQSASPMSYVVPVKVPQDQTQMFQYYPVYMLLPWEQPQTVTSSPQHTGQQLFEEQIPFYNQFGFAPPQAEPGVPGGQQHLAFDSFVGTAPETPGMPVEGSLLYPQKEPISFKHDNAGVFMPTTSPKPSTDNFFTSGIDPTIAPEQKVKTDSLREP.

The N-terminal stretch at 1–15 (MKIIILLGLIGASSS) is a signal peptide. The tract at residues 100-124 (QGGQAGQPDLSQQQTPPQTQQSASP) is disordered. Over residues 110–121 (SQQQTPPQTQQS) the composition is skewed to low complexity. O-linked (GalNAc...) threonine glycans are attached at residues T114 and T118. The interval 125–127 (MSY) is interaction with ARHGEF5. O-linked (GalNAc...) threonine glycosylation is found at T159, T240, T241, T247, T252, T258, and T267. The segment covering 240–252 (TTSPKPSTDNFFT) has biased composition (polar residues). Residues 240–273 (TTSPKPSTDNFFTSGIDPTIAPEQKVKTDSLREP) are disordered. Positions 263–273 (QKVKTDSLREP) are enriched in basic and acidic residues.

This sequence belongs to the ODAM family. As to quaternary structure, interacts (via C-terminus) with ARHGEF5. Post-translationally, O-glycosylated. In terms of tissue distribution, highly expressed in tooth-associated epithelia. Predominantly expressed in mandible.

The protein localises to the secreted. It is found in the cytoplasm. Its subcellular location is the nucleus. Its function is as follows. Tooth-associated epithelia protein that probably plays a role in odontogenesis, the complex process that results in the initiation and generation of the tooth. May be incorporated in the enamel matrix at the end of mineralization process. Involved in the induction of RHOA activity via interaction with ARHGEF and expression of downstream factors such as ROCK. Plays a role in attachment of the junctional epithelium to the tooth surface. The protein is Odontogenic ameloblast-associated protein (Odam) of Mus musculus (Mouse).